Consider the following 387-residue polypeptide: 3-ketoacyl-CoA thiolase (387 aa).

The Acyl-thioester intermediate role is filled by cysteine 91. Active-site proton acceptor residues include histidine 343 and cysteine 373.

The protein belongs to the thiolase-like superfamily. Thiolase family. As to quaternary structure, heterotetramer of two alpha chains (FadB) and two beta chains (FadA).

It is found in the cytoplasm. It carries out the reaction an acyl-CoA + acetyl-CoA = a 3-oxoacyl-CoA + CoA. Its pathway is lipid metabolism; fatty acid beta-oxidation. Catalyzes the final step of fatty acid oxidation in which acetyl-CoA is released and the CoA ester of a fatty acid two carbons shorter is formed. In Escherichia coli (strain UTI89 / UPEC), this protein is 3-ketoacyl-CoA thiolase.